Here is a 182-residue protein sequence, read N- to C-terminus: MQTQSLPTDSLPASSALRSVAVDKQDFRDAMARLGSAVNIITTDGPAGRAGFTASAVCSVTDTPPTLLVCLNRSASVYSVFQQNQTLCVNTLCAEHESLSNLFGGKTPMEMRFSAARWSTLVTGCPVLSGAVASFDCHITQVISVGTHDILFCQAAAVIHNDDQHGLAYFDRCYHPLMRQSR.

The protein belongs to the non-flavoprotein flavin reductase family. RutF subfamily.

It catalyses the reaction FMNH2 + NAD(+) = FMN + NADH + 2 H(+). Functionally, catalyzes the reduction of FMN to FMNH2 which is used to reduce pyrimidine by RutA via the Rut pathway. This chain is FMN reductase (NADH) RutF, found in Yersinia enterocolitica serotype O:8 / biotype 1B (strain NCTC 13174 / 8081).